Consider the following 1226-residue polypeptide: Arf guanine nucleotide exchange factor SYT1 (1226 aa).

2 disordered regions span residues 17 to 39 (HSNDKNGNKKGGSNVSTGIDKLR) and 113 to 158 (RNGQ…RNSK). Residues 131–142 (SIEKVPKPDGER) show a composition bias toward basic and acidic residues. Threonine 277 carries the phosphothreonine modification. Disordered regions lie at residues 311–405 (NSLM…TGMS), 954–1022 (STGS…NEDY), and 1178–1198 (LEHGKGEEEGQGNNDDSDGID). Over residues 349-360 (LSRSRSQSTSFV) the composition is skewed to polar residues. Serine 369 carries the post-translational modification Phosphoserine. Polar residues predominate over residues 386–405 (GPTSVYNNKSNANSTITGMS). Residues 405-620 (SRRSSSIVNA…TYFYENVTAK (216 aa)) form the SEC7 domain. A PH domain is found at 844-1074 (ILQMGAIMNL…DSINLFSAYD (231 aa)). 2 stretches are compositionally biased toward low complexity: residues 956 to 969 (GSHTSNTTAASSSA) and 994 to 1017 (SSVSNGESDNDSVSSSDNQLSSND).

Its subcellular location is the cytoplasm. With respect to regulation, inhibited by brefeldin A. Its function is as follows. Guanine nucleotide exchange factor for Arf GTPases, stimulating the nucleotide exchange from the GDP-bound to the GTP-bound form. Catalyzes both the GDP release by and the GTP binding to ARF2. Has no exchange activity on Rab GTPases. Involved in vesicular transport. This is Arf guanine nucleotide exchange factor SYT1 (SYT1) from Saccharomyces cerevisiae (strain ATCC 204508 / S288c) (Baker's yeast).